The sequence spans 100 residues: Large ribosomal subunit protein uL23 (100 aa).

Belongs to the universal ribosomal protein uL23 family. In terms of assembly, part of the 50S ribosomal subunit. Contacts protein L29, and trigger factor when it is bound to the ribosome.

One of the early assembly proteins it binds 23S rRNA. One of the proteins that surrounds the polypeptide exit tunnel on the outside of the ribosome. Forms the main docking site for trigger factor binding to the ribosome. The protein is Large ribosomal subunit protein uL23 of Acaryochloris marina (strain MBIC 11017).